Reading from the N-terminus, the 493-residue chain is Probable cytochrome P450 CYP36A1 (493 aa).

The next 3 membrane-spanning stretches (helical) occupy residues 1–21, 60–80, and 290–310; these read MLFAQLVILVIIVMLFLCRFA, GGIFTLWLPFPTIVICDYDML, and QLIVAIYDLYSAGMETIIIVL. Cys-440 provides a ligand contact to heme.

This sequence belongs to the cytochrome P450 family. It depends on heme as a cofactor.

It is found in the membrane. Cytochromes P450 are a group of heme-thiolate monooxygenases. They oxidize a variety of structurally unrelated compounds, including steroids, fatty acids, and xenobiotics. The polypeptide is Probable cytochrome P450 CYP36A1 (cyp-36A1) (Caenorhabditis elegans).